Reading from the N-terminus, the 437-residue chain is UDP-N-acetylmuramate--L-alanine ligase (437 aa).

Residue 114-120 (GTHGKTS) participates in ATP binding.

This sequence belongs to the MurCDEF family.

The protein localises to the cytoplasm. The enzyme catalyses UDP-N-acetyl-alpha-D-muramate + L-alanine + ATP = UDP-N-acetyl-alpha-D-muramoyl-L-alanine + ADP + phosphate + H(+). Its pathway is cell wall biogenesis; peptidoglycan biosynthesis. Cell wall formation. The protein is UDP-N-acetylmuramate--L-alanine ligase of Lactobacillus johnsonii (strain CNCM I-12250 / La1 / NCC 533).